We begin with the raw amino-acid sequence, 904 residues long: Eukaryotic translation initiation factor 3 subunit C (904 aa).

Disordered stretches follow at residues M1–D38 and F156–K290. Residues I22 to F32 show a composition bias toward polar residues. Residues D161–A183 show a composition bias toward acidic residues. Basic and acidic residues predominate over residues F194–K206. A compositionally biased stretch (acidic residues) spans D207–A232. The segment covering I237–K247 has biased composition (basic and acidic residues). Over residues K257–K272 the composition is skewed to basic residues. A PCI domain is found at F636 to P812. The segment at R847 to E904 is disordered. Low complexity predominate over residues Y860–N873. Over residues R874–E904 the composition is skewed to basic and acidic residues.

It belongs to the eIF-3 subunit C family. Component of the eukaryotic translation initiation factor 3 (eIF-3) complex.

It is found in the cytoplasm. In terms of biological role, component of the eukaryotic translation initiation factor 3 (eIF-3) complex, which is involved in protein synthesis of a specialized repertoire of mRNAs and, together with other initiation factors, stimulates binding of mRNA and methionyl-tRNAi to the 40S ribosome. The eIF-3 complex specifically targets and initiates translation of a subset of mRNAs involved in cell proliferation. The chain is Eukaryotic translation initiation factor 3 subunit C from Culex quinquefasciatus (Southern house mosquito).